We begin with the raw amino-acid sequence, 415 residues long: Protein PIN-LIKES 4 (415 aa).

Topologically, residues 1–13 are lumenal; the sequence is MKLLELFIASSKP. A helical transmembrane segment spans residues 14 to 34; the sequence is VVETLLITSVGFYLALDTVNL. Residues 35 to 44 are Cytoplasmic-facing; sequence LGHDARKHLN. Residues 45 to 61 form a helical membrane-spanning segment; sequence NIVFYVFSPSLIGSRLA. At 62 to 75 the chain is on the lumenal side; the sequence is DSVTYESLVKMWFM. Residues 76 to 96 traverse the membrane as a helical segment; the sequence is PVNVLLTFMIGSLLGWIVIVI. The Cytoplasmic segment spans residues 97-106; the sequence is TKPPSQLRGL. The helical transmembrane segment at 107 to 127 threads the bilayer; sequence IISCCASGNLGTMPLIIIPAI. The Lumenal segment spans residues 128 to 143; the sequence is CKEKGGPFGDSESCEK. The chain crosses the membrane as a helical span at residues 144–161; the sequence is YGMGYVTLSMTAFFISVY. Residues 162–244 lie on the Cytoplasmic side of the membrane; sequence KHDTNWYVSG…RVVSLSKKVN (83 aa). A helical membrane pass occupies residues 245–265; it reads LGSIFAPATIAAIIALVIGLI. The Lumenal portion of the chain corresponds to 266–285; sequence TPLRNLIIGTVAPFRVIQDS. A helical membrane pass occupies residues 286-306; it reads LTLLGDGAIPAMTLILGGNLL. The Cytoplasmic segment spans residues 307 to 322; sequence KGMRRSEVRSSEMKNS. A helical transmembrane segment spans residues 323-343; it reads CIIGVLVARYILLPVSGVLLV. The Lumenal portion of the chain corresponds to 344-355; that stretch reads RGAYKLDLVTSE. The helical transmembrane segment at 356–376 threads the bilayer; it reads PLYQFVLLLQYAVPPAMNLGT. The Cytoplasmic segment spans residues 377 to 389; sequence KTQLFGAGESECS. The chain crosses the membrane as a helical span at residues 390–410; that stretch reads VIMLWTYSLAAVSLTVWPTFF. The Lumenal portion of the chain corresponds to 411 to 415; the sequence is MWLVT.

The protein belongs to the auxin efflux carrier (TC 2.A.69.2) family. As to expression, expressed in seedlings, rosette and cauline leaves, stems, flowers and siliques.

The protein resides in the endoplasmic reticulum membrane. Its function is as follows. Involved in cellular auxin homeostasis by regulating auxin metabolism. Regulates intracellular auxin accumulation at the endoplasmic reticulum and thus auxin availability for nuclear auxin signaling. The protein is Protein PIN-LIKES 4 of Arabidopsis thaliana (Mouse-ear cress).